Here is a 287-residue protein sequence, read N- to C-terminus: 1-acyl-sn-glycerol-3-phosphate acyltransferase alpha (287 aa).

Residues 1 to 26 (MELWPGAGTLLLLLFLLLLLLLPTLW) form the signal peptide. Over 27 to 37 (FCSPSAKYFFK) the chain is Lumenal. A helical membrane pass occupies residues 38–58 (MAFYNGWILFLAVLAIPVCAV). Over 59-127 (RGRNVENMKI…PGHCVPIAKR (69 aa)) the chain is Cytoplasmic. Residues 104-109 (HQSSLD) carry the HXXXXD motif motif. Residues 128–148 (ELLWAGSAGLACWLAGVIFID) form a helical membrane-spanning segment. Over 149–192 (RKRTGDAISVMSEVAQTLLTQDVRVWVFPEGTRNHNGSMLPFKR) the chain is Lumenal. The EGTR motif motif lies at 178–181 (EGTR).

It belongs to the 1-acyl-sn-glycerol-3-phosphate acyltransferase family.

It localises to the endoplasmic reticulum membrane. The catalysed reaction is a 1-acyl-sn-glycero-3-phosphate + an acyl-CoA = a 1,2-diacyl-sn-glycero-3-phosphate + CoA. It carries out the reaction 1-(9Z-octadecenoyl)-sn-glycero-3-phosphate + (9Z)-octadecenoyl-CoA = 1,2-di-(9Z-octadecenoyl)-sn-glycero-3-phosphate + CoA. The enzyme catalyses 1-(9Z-octadecenoyl)-sn-glycero-3-phosphate + hexadecanoyl-CoA = 1-(9Z)-octadecenoyl-2-hexadecanoyl-sn-glycero-3-phosphate + CoA. It catalyses the reaction heptadecanoyl-CoA + 1-(9Z-octadecenoyl)-sn-glycero-3-phosphate = 1-(9Z)-octadecenoyl-2-heptadecanoyl-sn-glycero-3-phosphate + CoA. The catalysed reaction is 1-(9Z-octadecenoyl)-sn-glycero-3-phosphate + octadecanoyl-CoA = 1-(9Z-octadecenoyl)-2-octadecanoyl-sn-glycero-3-phosphate + CoA. It carries out the reaction 1-(9Z-octadecenoyl)-sn-glycero-3-phosphate + (9Z,12Z)-octadecadienoyl-CoA = 1-(9Z)-octadecenoyl-2-(9Z,12Z)-octadecadienoyl-sn-glycero-3-phosphate + CoA. The enzyme catalyses 1-(9Z-octadecenoyl)-sn-glycero-3-phosphate + tetradecanoyl-CoA = 1-(9Z)-octadecenoyl-2-tetradecanoyl-sn-glycero-3-phosphate + CoA. It catalyses the reaction pentadecanoyl-CoA + 1-(9Z-octadecenoyl)-sn-glycero-3-phosphate = 1-(9Z)-octadecenoyl-2-pentadecanoyl-sn-glycero-3-phosphate + CoA. The catalysed reaction is 1-hexadecanoyl-sn-glycero-3-phosphate + (9Z)-octadecenoyl-CoA = 1-hexadecanoyl-2-(9Z-octadecenoyl)-sn-glycero-3-phosphate + CoA. It carries out the reaction 1-(9Z,12Z,15Z)-octadecatrienoyl-sn-glycero-3-phosphate + (9Z)-octadecenoyl-CoA = 1-(9Z,12Z,15Z)-octadecatrienoyl-2-(9Z)-octadecenoyl-sn-glycero-3-phosphate + CoA. The enzyme catalyses 1-(6Z,9Z,12Z-octadecatrienoyl)-sn-glycero-3-phosphate + (9Z)-octadecenoyl-CoA = (6Z,9Z,12Z)-octadecatrienoyl-2-(9Z)-octadecenoyl-sn-glycero-3-phosphate + CoA. It catalyses the reaction 1-eicosanoyl-sn-glycero-3-phosphate + (9Z)-octadecenoyl-CoA = 1-eicosanoyl-2-(9Z)-octadecenoyl-sn-glycero-3-phosphate + CoA. The catalysed reaction is 1-tetradecanoyl-sn-glycerol 3-phosphate + (9Z)-octadecenoyl-CoA = 1-tetradecanoyl-2-(9Z)-octadecenoyl-sn-glycero-3-phosphate + CoA. It carries out the reaction 1-(9Z-octadecenoyl)-sn-glycero-3-phosphate + (5Z,8Z,11Z,14Z)-eicosatetraenoyl-CoA = 1-(9Z)-octadecenoyl-2-(5Z,8Z,11Z,14Z)-eicosatetraenoyl-sn-glycero-3-phosphate + CoA. The enzyme catalyses 1-(9Z-octadecenoyl)-sn-glycero-3-phosphate + dodecanoyl-CoA = 1-(9Z)-octadecenoyl-2-dodecanoyl-sn-glycero-3-phosphate + CoA. It catalyses the reaction (6Z)-octadecenoyl-CoA + 1-(9Z-octadecenoyl)-sn-glycero-3-phosphate = 1-(9Z)-octadecenoyl-2-(6Z)-octadecenoyl-sn-glycero-3-phosphate + CoA. The catalysed reaction is (11Z)-octadecenoyl-CoA + 1-(9Z-octadecenoyl)-sn-glycero-3-phosphate = 1-(9Z)-octadecenoyl-2-(11Z)-octadecenoyl-sn-glycero-3-phosphate + CoA. It carries out the reaction (9Z)-hexadecenoyl-CoA + 1-(9Z-octadecenoyl)-sn-glycero-3-phosphate = 1-(9Z-octadecenoyl)-2-(9Z-hexadecenoyl)-sn-glycero-3-phosphate + CoA. It participates in phospholipid metabolism; CDP-diacylglycerol biosynthesis; CDP-diacylglycerol from sn-glycerol 3-phosphate: step 2/3. Converts 1-acyl-sn-glycerol-3-phosphate (lysophosphatidic acid or LPA) into 1,2-diacyl-sn-glycerol-3-phosphate (phosphatidic acid or PA) by incorporating an acyl moiety at the sn-2 position of the glycerol backbone. In Ovis aries (Sheep), this protein is 1-acyl-sn-glycerol-3-phosphate acyltransferase alpha (AGPAT1).